Consider the following 347-residue polypeptide: UDP-rhamnose/UDP-galactose transporter 1 (347 aa).

10 helical membrane-spanning segments follow: residues 11 to 31 (AVSDVGAWAMNVISSVGIIMA), 43 to 63 (FGFATTLTGFHFAFTALVGMV), 80 to 100 (LLWFSIVANISIAAMNFSLML), 103 to 123 (VGFYQISKLSMIPVVCVLEWI), 132 to 152 (EVKASVMVVVIGVGICTVTDV), 159 to 179 (FICACTAVFSTSLQQISIGSL), 195 to 215 (APIQAISLLICGPFVDYLLSG), 223 to 243 (MTYGAIFCILLSCALAVFCNI), 256 to 276 (SFQVLGHMKTVCVLTLGWLLF), and 285 to 305 (IAGMAIAIVGMVIYSWAVDIE).

This sequence belongs to the TPT transporter family. TPT (TC 2.A.7.9) subfamily. As to expression, widely expressed in the whole plant.

The protein localises to the golgi apparatus membrane. Functionally, nucleotide-sugar transporter that transports UDP-rhamnose or UDP-galactose and UMP in a strict counter-exchange mode. The polypeptide is UDP-rhamnose/UDP-galactose transporter 1 (Arabidopsis thaliana (Mouse-ear cress)).